We begin with the raw amino-acid sequence, 665 residues long: Target of rapamycin complex 2 subunit sin1 (665 aa).

A Phosphoserine modification is found at S62. Polar residues-rich tracts occupy residues 65 to 83 (IVANDTVSNVRKPSDTKQV) and 100 to 109 (YATSDLSESS). The disordered stretch occupies residues 65-112 (IVANDTVSNVRKPSDTKQVNGAGGQVNHSRAEDSDYATSDLSESSDVG). At S133 the chain carries Phosphoserine. Residues 255–392 (TSALRALLEH…ATPAQIKENQ (138 aa)) enclose the CRIM domain. The tract at residues 395–433 (YPFKSKHPTSIPEANNKTHIRHTSSTSSQSQKQAQDVKD) is disordered. 4 positions are modified to phosphoserine: S404, S490, S502, and S530. Residues 517 to 537 (RDKKGSTQQLPTSSPQNSVYG) form a disordered region. Polar residues predominate over residues 522-536 (STQQLPTSSPQNSVY). An SIN1-type PH domain is found at 558–659 (TYQEFLVWKR…IVSRIRALMN (102 aa)).

The protein belongs to the SIN1 family. In terms of assembly, the target of rapamycin complex 2 (TORC2) is composed of at least bit61, pop3/wat1, sin1, ste20 and tor1. Interacts with the sty1 MAP kinase. In terms of processing, phosphorylated; under environmental stress. Either Ser-61 or Ser-62 and Ser-298, Ser-299 or Ser-301 are phosphorylated as well.

In terms of biological role, component of the mechanistic target of rapamycin complex 2 (mTORC2), which regulates multiple cellular processes to control cell growth in response to environmental signals. In response to signals, TORC2 phosphorylates AGC protein kinase family members, such as gad8. TORC2 is required for cell survival under various stress conditions. TORC2 positively controls G1 cell-cycle arrest, sexual development and amino acid uptake. Positively regulates amino acid uptake through the control of expression of amino acid permeases. Within the mTORC2 complex, sin1 acts as a substrate adapter which recognizes and binds AGC protein kinase family members for phosphorylation by tor1. The sequence is that of Target of rapamycin complex 2 subunit sin1 from Schizosaccharomyces pombe (strain 972 / ATCC 24843) (Fission yeast).